Consider the following 262-residue polypeptide: Type III pantothenate kinase (262 aa).

6–13 (DVGNTNAV) is a binding site for ATP. Substrate is bound by residues Tyr-100 and 107-110 (GADR). Asp-109 serves as the catalytic Proton acceptor. Asp-129 contributes to the K(+) binding site. Residue Thr-132 coordinates ATP. Residue Thr-184 coordinates substrate.

Belongs to the type III pantothenate kinase family. As to quaternary structure, homodimer. Requires NH4(+) as cofactor. K(+) serves as cofactor.

The protein localises to the cytoplasm. It carries out the reaction (R)-pantothenate + ATP = (R)-4'-phosphopantothenate + ADP + H(+). It functions in the pathway cofactor biosynthesis; coenzyme A biosynthesis; CoA from (R)-pantothenate: step 1/5. Catalyzes the phosphorylation of pantothenate (Pan), the first step in CoA biosynthesis. This chain is Type III pantothenate kinase, found in Bacillus anthracis (strain A0248).